Here is a 144-residue protein sequence, read N- to C-terminus: Large ribosomal subunit protein uL16 (144 aa).

This sequence belongs to the universal ribosomal protein uL16 family. As to quaternary structure, part of the 50S ribosomal subunit.

Its function is as follows. Binds 23S rRNA and is also seen to make contacts with the A and possibly P site tRNAs. The chain is Large ribosomal subunit protein uL16 from Heliobacterium modesticaldum (strain ATCC 51547 / Ice1).